Here is a 311-residue protein sequence, read N- to C-terminus: MDTTVPTFSLAELQQGLHQDEFRRCLRDKGLFYLTDCGLTDTELKSAKDLVIDFFEHGSEAEKRAVTSPVPTMRRGFTGLESESTAQITNTGSYSDYSMCYSMGTADNLFPSGDFERIWTQYFDRQYTASRAVAREVLRATGTEPDGGVEAFLDCEPLLRFRYFPQVPEHRSAEEQPLRMAPHYDLSMVTLIQQTPCANGFVSLQAEVGGAFTDLPYRPDAVLVFCGAIATLVTGGQVKAPRHHVAAPRRDQIAGSSRTSSVFFLRPNADFTFSVPLARECGFDVSLDGETATFQDWIGGNYVNIRRTSKA.

A Fe2OG dioxygenase domain is found at Asp-154 to Pro-267.

The protein belongs to the iron/ascorbate-dependent oxidoreductase family. The cofactor is Fe cation. L-ascorbate serves as cofactor.

It carries out the reaction penicillin N + 2-oxoglutarate + O2 = deacetoxycephalosporin C + succinate + CO2 + H2O. Its pathway is antibiotic biosynthesis; cephalosporin C biosynthesis. Catalyzes the step from penicillin N to deacetoxy-cephalosporin C. The polypeptide is Deacetoxycephalosporin C synthase (cefE) (Streptomyces clavuligerus).